The following is a 510-amino-acid chain: Leucine-rich repeat-containing protein 53 (510 aa).

LRR repeat units follow at residues 34–55 (TTRV…NLSL), 58–79 (NLAL…ALDG), 82–102 (MLRT…TDHT), 108–129 (SLQV…WFRN), 132–153 (GLTR…SFGG), 158–179 (SLRH…AFRP), and 182–203 (QLQE…FTPL). Residues 214–271 (NQWSCTCDLHPLARFLRNYIKSSAHTLRNAKDLNCQPSTAAVAAAQSVLRLSETNCDP) enclose the LRRCT domain. A helical transmembrane segment spans residues 294–314 (LLTVLGFAGAVGLTCLGLVVF).

The protein localises to the membrane. The sequence is that of Leucine-rich repeat-containing protein 53 (LRRC53) from Macaca fascicularis (Crab-eating macaque).